The following is a 235-amino-acid chain: MKNIKKNQVMNLGPNSKLLKEYKSQLIELNIEQFEAGIGLILGDAYIRSRDEGKTYCMQFEWKNKAYMDHVCLLYDQWVLSPPHKKERVNHLGNLVITWGAQTFKHQAFNKLANLFIVNNKKTIPNNLVENYLTPMSLAYWFMDDGGKWDYNKNSTNKSIVLNTQSFTFEEVEYLVKGLRNKFQLNCYVKINKNKPIIYIDSMSYLIFYNLIKPYLIPQMMYKLPNTISSETFLK.

The protein belongs to the LAGLIDADG endonuclease family. Monomer. Requires Mg(2+) as cofactor.

The protein resides in the mitochondrion. Its function is as follows. Mitochondrial DNA endonuclease involved in intron homing. It introduces a specific double-strand break in the DNA of the 21S rRNA gene and thus mediates the insertion of an intron, containing its own coding sequence (group I intron), into an intronless gene. Specifically recognizes and cleaves the sequence 5'-TAGGGATAACAGGGTAAT-3'. The polypeptide is Intron-encoded endonuclease I-SceI (SCEI) (Saccharomyces cerevisiae (strain ATCC 204508 / S288c) (Baker's yeast)).